The following is a 160-amino-acid chain: Cytosolic iron-sulfur assembly component 2A (160 aa).

The Zn(2+) site is built by His-89, His-123, Glu-150, and Glu-153.

It belongs to the MIP18 family. In terms of assembly, monomer and homodimer. Component of the CIA complex. Interacts with CIAO1. Interacts with IREB2. Interacts with APAF1.

The protein resides in the cytoplasm. Functionally, component of the cytosolic iron-sulfur protein assembly (CIA) complex, a multiprotein complex that mediates the incorporation of iron-sulfur cluster into extramitochondrial Fe/S proteins. As a CIA complex component and in collaboration with CIAO1 specifically matures ACO1 and stabilizes IREB2, connecting cytosolic iron-sulfur protein maturation with cellular iron regulation. May play a role in chromosome segregation through establishment of sister chromatid cohesion. May induce apoptosis in collaboration with APAF1. The protein is Cytosolic iron-sulfur assembly component 2A of Bos taurus (Bovine).